A 20-amino-acid polypeptide reads, in one-letter code: Brevinin-1SPd (20 aa).

Cysteine 14 and cysteine 20 form a disulfide bridge.

As to expression, expressed by the skin glands.

It is found in the secreted. Functionally, antimicrobial peptide with activity against Gram-negative and Gram-positive bacteria (MIC=13 uM against E.coli, MIC=3 uM against S.aureus) and fungi (MIC=3 uM against C.albicans). Shows hemolytic activity on human erythrocytes (HC(50)=8 uM). This chain is Brevinin-1SPd, found in Lithobates septentrionalis (Mink frog).